Reading from the N-terminus, the 507-residue chain is F-box only protein 31 (507 aa).

The segment at 19-42 is disordered; that stretch reads RQQRRGPAETAAADSEADTDPEEE. Ser-33 carries the phosphoserine modification. The span at 33–42 shows a compositional bias: acidic residues; the sequence is SEADTDPEEE. Thr-37 is subject to Phosphothreonine. A D box motif is present at residues 50 to 55; it reads RCSLLE. The F-box domain maps to 50–96; that stretch reads RCSLLELPPELLVEIFASLPGTDLPSLAQVCSRFRRILHTDTIWRRR. Residues Cys-192, His-200, Cys-216, and His-222 each contribute to the Zn(2+) site. Ser-264 carries the phosphoserine; by ATM modification. A DDL motif motif is present at residues 283 to 285; that stretch reads DDL. Residues 366-417 form a disordered region; sequence EQEAGEGAAPPREPSAKAADGPPAKDGKEPGGGAEAAEQSASSGQGQPFVLP. Over residues 400 to 412 the composition is skewed to low complexity; that stretch reads EAAEQSASSGQGQ. Phosphoserine is present on Ser-448.

The protein belongs to the FBXO31 family. As to quaternary structure, part of a SCF (SKP1-cullin-F-box) protein ligase complex SCF(FBXO31) composed of CUL1, SKP1, RBX1 and FBXO31. Interacts (when phosphorylated at Ser-33) with CDC20, promoting ubiquitination by the APC/C complex. In terms of processing, phosphorylation at Ser-264 by ATM following gamma-irradiation results in its stabilization. Phosphorylation at Ser-448 in absence of stress promotes its ubiquitination and degradation by the SCF(FBXO46) complex. Phosphorylation at Ser-33 by AKT1 promotes association with CDC20 and ubiquitination by the APC/C complex. Ubiquitinated by the SCF(FBXO46) complex in absence of stress, promoting its degradation. Ubiquitinated by the APC/C complex following phosphorylation at Ser-33, leading to its degradation by the proteasome.

Its subcellular location is the cytoplasm. It is found in the cytoskeleton. The protein resides in the microtubule organizing center. The protein localises to the centrosome. It participates in protein modification; protein ubiquitination. Its function is as follows. Substrate-recognition component of the SCF(FBXO31) protein ligase complex, which specifically mediates the ubiquitination of proteins amidated at their C-terminus in response to oxidative stress, leading to their degradation by the proteasome. FBXO31 specifically recognizes and binds C-terminal peptides bearing an amide: C-terminal amidation in response to oxidative stress takes place following protein fragmentation. The SCF(FBXO31) also plays a role in G1 arrest following DNA damage by mediating ubiquitination of phosphorylated cyclin-D1 (CCND1), promoting its degradation by the proteasome, resulting in G1 arrest. The SCF(FBXO31) complex is however not a major regulator of CCND1 stability during the G1/S transition. In response to genotoxic stress, the SCF(FBXO31) complex directs ubiquitination and degradation of phosphorylated MDM2, thereby promoting p53/TP53-mediated DNA damage response. SCF(FBXO31) complex is required for genomic integrity by catalyzing ubiquitination and degradation of cyclin-A (CCNA1 and/or CCNA2) during the G1 phase. In response to genotoxic stress, the SCF(FBXO31) complex directs ubiquitination and degradation of phosphorylated FBXO46 and MAP2K6. SCF(FBXO31) complex promotes ubiquitination and degradation of CDT1 during the G2 phase to prevent re-replication. The SCF(FBXO31) complex also mediates ubiquitination and degradation of DUSP6, OGT and PARD6A. This is F-box only protein 31 from Mus musculus (Mouse).